A 1846-amino-acid chain; its full sequence is Unconventional myosin-Vb (1846 aa).

The Myosin N-terminal SH3-like domain maps to 8–60 (SRYTRVWIPDPDEVWRSAELTKDYKDGDESLQLRLEDDTILDYPIDVQNNQVP). The requires for interaction with LIMA1 stretch occupies residues 21–40 (VWRSAELTKDYKDGDESLQL). Positions 69-763 (VGENDLTALS…QVAYLEKLRA (695 aa)) constitute a Myosin motor domain. 163–170 (GESGAGKT) contributes to the ATP binding site. The tract at residues 599 to 629 (VPATNTAKSRSSSKINVRSSRPLMKAPNKEH) is disordered. Residues 607–619 (SRSSSKINVRSSR) show a composition bias toward low complexity. Residues 641 to 663 (LNLLMETLNATTPHYVRCIKPND) are actin-binding. 6 consecutive IQ domains span residues 767–788 (REAT…KYRR), 789–813 (LRAA…EHLR), 814–837 (RTRA…YCRV), 838–861 (RRAA…PPVL), 862–884 (TEHK…HFQR), and 885–914 (QRDA…EARS). 2 coiled-coil regions span residues 915–1272 (AEHL…ADQR) and 1334–1450 (LKQV…RHHE). Positions 1088 to 1122 (RDEQQTPGHRKNPSNQSSLESDSNYPSISTSEIGD) are disordered. Residues 1100–1120 (PSNQSSLESDSNYPSISTSEI) show a composition bias toward polar residues. Position 1444 is a phosphoserine (Ser-1444). The 278-residue stretch at 1524 to 1801 (SSTINGIKKV…IRTIQAQLQE (278 aa)) folds into the Dilute domain.

This sequence belongs to the TRAFAC class myosin-kinesin ATPase superfamily. Myosin family. As to quaternary structure, component of the CART complex, at least composed of ACTN4, HGS/HRS, MYO5B and TRIM3. Interacts with RAB11FIP2. Interacts with RAB11A and RAB8A. Found in a complex with CFTR and RAB11A. Interacts with NPC1L1. Interacts with LIMA1.

It localises to the cytoplasm. Its function is as follows. May be involved in vesicular trafficking via its association with the CART complex. The CART complex is necessary for efficient transferrin receptor recycling but not for EGFR degradation. Required in a complex with RAB11A and RAB11FIP2 for the transport of NPC1L1 to the plasma membrane. Together with RAB11A participates in CFTR trafficking to the plasma membrane and TF (transferrin) recycling in nonpolarized cells. Together with RAB11A and RAB8A participates in epithelial cell polarization. Together with RAB25 regulates transcytosis. Required for proper localization of bile salt export pump ABCB11 at the apical/canalicular plasma membrane of hepatocytes. This Rattus norvegicus (Rat) protein is Unconventional myosin-Vb (Myo5b).